The sequence spans 743 residues: 1,4-alpha-glucan branching enzyme GlgB (743 aa).

D416 functions as the Nucleophile in the catalytic mechanism. The active-site Proton donor is E469.

The protein belongs to the glycosyl hydrolase 13 family. GlgB subfamily. In terms of assembly, monomer.

The catalysed reaction is Transfers a segment of a (1-&gt;4)-alpha-D-glucan chain to a primary hydroxy group in a similar glucan chain.. The protein operates within glycan biosynthesis; glycogen biosynthesis. Functionally, catalyzes the formation of the alpha-1,6-glucosidic linkages in glycogen by scission of a 1,4-alpha-linked oligosaccharide from growing alpha-1,4-glucan chains and the subsequent attachment of the oligosaccharide to the alpha-1,6 position. The protein is 1,4-alpha-glucan branching enzyme GlgB of Shewanella baltica (strain OS155 / ATCC BAA-1091).